Consider the following 134-residue polypeptide: MGRDTIADIITSIRNVDMDRKVTVRIASTNITENIVKILLREGFIENVRKHQESNKYFLVLTLRHRRNRKGTYRTILNLKRISRPGLRIYSNYQRIPRILGGMGIVILSTSRGIMTDREARLERIGGEILCYIW.

It belongs to the universal ribosomal protein uS8 family. As to quaternary structure, part of the 30S ribosomal subunit.

The protein resides in the plastid. It is found in the chloroplast. Functionally, one of the primary rRNA binding proteins, it binds directly to 16S rRNA central domain where it helps coordinate assembly of the platform of the 30S subunit. This chain is Small ribosomal subunit protein uS8c (rps8), found in Vitis vinifera (Grape).